Consider the following 299-residue polypeptide: 33 kDa chaperonin (299 aa).

2 disulfides stabilise this stretch: C234–C236 and C268–C271.

It belongs to the HSP33 family. Post-translationally, under oxidizing conditions two disulfide bonds are formed involving the reactive cysteines. Under reducing conditions zinc is bound to the reactive cysteines and the protein is inactive.

Its subcellular location is the cytoplasm. In terms of biological role, redox regulated molecular chaperone. Protects both thermally unfolding and oxidatively damaged proteins from irreversible aggregation. Plays an important role in the bacterial defense system toward oxidative stress. The protein is 33 kDa chaperonin of Pseudomonas putida (strain GB-1).